A 467-amino-acid polypeptide reads, in one-letter code: Dihydrolipoyl dehydrogenase (467 aa).

FAD is bound by residues 33 to 41 (EPKYWGGIC), K50, and G113. C41 and C46 are joined by a disulfide. NAD(+) is bound by residues 181–185 (GAGAI), E204, and 269–272 (AIGF). The FAD site is built by D312 and A320. H446 functions as the Proton acceptor in the catalytic mechanism.

The protein belongs to the class-I pyridine nucleotide-disulfide oxidoreductase family. As to quaternary structure, homodimer. Part of the PDH complex, consisting of multiple copies of AceE (E1), DlaT (E2) and Lpd (E3), and of the BCKADH complex, consisting of multiple copies of BkdA/BkdB (E1), BkdC (E2) and Lpd (E3). It depends on FAD as a cofactor.

Its subcellular location is the cytoplasm. The catalysed reaction is N(6)-[(R)-dihydrolipoyl]-L-lysyl-[protein] + NAD(+) = N(6)-[(R)-lipoyl]-L-lysyl-[protein] + NADH + H(+). Functionally, lipoamide dehydrogenase is a component of the alpha-ketoacid dehydrogenase complexes. Catalyzes the reoxidation of dihydrolipoyl groups which are covalently attached to the lipoate acyltransferase components (E2) of the complexes. The chain is Dihydrolipoyl dehydrogenase (lpd) from Mycobacterium leprae (strain TN).